Consider the following 368-residue polypeptide: MGSTGNAEIQIIPTHSSDEEANLFAMQLASAAVLPMALKAAIELDVLEIMAKSVPPSGYISPAEIAAQLPTTNPEAPVMLDRVLRLLASYSVVTYTLRELPSGKVERLYGLAPVCKFLTKNEDGVSLAPFLLTATDKVLLEPWFYLKDAILEGGIPFNKAYGMNEFDYHGTDHRFNKVFNKGMSSNSTITMKKILEMYNGFEGLTTIVDVGGGTGAVASMIVAKYPSINAINFDLPHVIQDAPAFSGVEHLGGDMFDGVPKGDAIFIKWICHDWSDEHCLKLLKNCYAALPDHGKVIVAEYILPPSPDPSIATKVVIHTDALMLAYNPGGKERTEKEFQALAMASGFRGFKVASCAFNTYVMEFLKTA.

The propeptide occupies 1–2; sequence MG. S-adenosyl-L-methionine is bound by residues serine 187, 211–212, aspartate 234, 254–255, and lysine 268; these read GG and DM. The active-site Proton acceptor is histidine 272.

It belongs to the class I-like SAM-binding methyltransferase superfamily. Cation-independent O-methyltransferase family. COMT subfamily. Homodimer. Expressed in petals, style and stamens, but not in stigma, sepals, leaves or stem tissues.

It catalyses the reaction (E)-isoeugenol + S-adenosyl-L-methionine = (E)-isomethyleugenol + S-adenosyl-L-homocysteine + H(+). Catalyzes the methylation of the para-4-hydroxyl of both eugenol and (iso)eugenol to methyleugenol and isomethyleugenol, respectively. The resulting products are part of a complex mixture of low-molecular-weight volatile compounds emitted by the flowers to attract pollinators. In Clarkia breweri (Fairy fans), this protein is (Iso)eugenol O-methyltransferase (IEMT1).